Here is a 79-residue protein sequence, read N- to C-terminus: Ferredoxin oxidoreductase 1 subunit ForD (79 aa).

2 consecutive 4Fe-4S ferredoxin-type domains span residues 3–35 (YVAQ…YTDE) and 37–65 (HHAY…RDSI). Cys-12, Cys-17, Cys-20, Cys-24, Cys-46, Cys-49, Cys-52, and Cys-56 together coordinate [4Fe-4S] cluster.

In terms of assembly, heterotetramer of one alpha, one beta, one delta and one gamma chain. [4Fe-4S] cluster serves as cofactor.

This is Ferredoxin oxidoreductase 1 subunit ForD (forD1) from Aquifex aeolicus (strain VF5).